Here is a 289-residue protein sequence, read N- to C-terminus: Transcription factor MafA (289 aa).

A compositionally biased stretch (low complexity) spans 52 to 73 (STPISTPCSSVPSSPSFCAPSP). Disordered regions lie at residues 52–87 (STPI…PNAA) and 126–164 (HHHH…HHHH). The segment covering 74–87 (GAQSGVNPSNPNAA) has biased composition (polar residues). Positions 152 to 164 (GHHHQVHHHHHHH) are enriched in basic residues. The segment at 201-226 (RLKQKRRTLKNRGYAQSCRYKRVQQR) is basic motif. One can recognise a bZIP domain in the interval 201–264 (RLKQKRRTLK…DLYKDKYEKL (64 aa)). Positions 229–250 (LETEKCQLQSQVEQLKQEVSRL) are leucine-zipper. A disordered region spans residues 266-289 (SRSFTTRESPPQGNPGKANADFFM). Positions 267 to 276 (RSFTTRESPP) are enriched in polar residues.

The protein belongs to the bZIP family. Maf subfamily.

The protein localises to the nucleus. Its function is as follows. Transcription factor, possibly involved in transcription regulation during lens development. The protein is Transcription factor MafA (mafa) of Xenopus tropicalis (Western clawed frog).